A 150-amino-acid polypeptide reads, in one-letter code: UPF0756 membrane protein ABSDF1616 (150 aa).

The next 4 membrane-spanning stretches (helical) occupy residues Met-1–Leu-21, Phe-45–Val-65, Phe-83–Gly-103, and Val-115–Val-135.

The protein belongs to the UPF0756 family.

The protein localises to the cell membrane. The sequence is that of UPF0756 membrane protein ABSDF1616 from Acinetobacter baumannii (strain SDF).